The chain runs to 151 residues: Small heat shock protein HspH (151 aa).

A sHSP domain is found at 28 to 138 (RAGEDNYPPY…KPRRIAINAA (111 aa)).

It belongs to the small heat shock protein (HSP20) family.

This is Small heat shock protein HspH (hspH) from Bradyrhizobium diazoefficiens (strain JCM 10833 / BCRC 13528 / IAM 13628 / NBRC 14792 / USDA 110).